Consider the following 283-residue polypeptide: Flagellar filament 35 kDa core protein (283 aa).

This sequence belongs to the bacterial flagellin family. The flagellum consists of two outer layers around a core that contains several antigenically related polypeptides.

Its subcellular location is the periplasmic flagellum. It is found in the periplasm. Functionally, component of the core of the flagella. The chain is Flagellar filament 35 kDa core protein (flaB) from Leptospira interrogans serogroup Icterohaemorrhagiae serovar Lai (strain 56601).